Reading from the N-terminus, the 216-residue chain is Large ribosomal subunit protein bL21 (216 aa).

The protein belongs to the bacterial ribosomal protein bL21 family. In terms of assembly, part of the 50S ribosomal subunit. Contacts protein L20.

Functionally, this protein binds to 23S rRNA in the presence of protein L20. The sequence is that of Large ribosomal subunit protein bL21 from Roseobacter denitrificans (strain ATCC 33942 / OCh 114) (Erythrobacter sp. (strain OCh 114)).